Reading from the N-terminus, the 429-residue chain is Adenylosuccinate synthetase (429 aa).

GTP-binding positions include 12–18 (GDEGKGK) and 40–42 (GHT). Asp-13 acts as the Proton acceptor in catalysis. Asp-13 and Gly-40 together coordinate Mg(2+). Residues 13–16 (DEGK), 38–41 (NAGH), Thr-128, Arg-142, Gln-223, Thr-238, and Arg-302 each bind IMP. Catalysis depends on His-41, which acts as the Proton donor. Residue 298–304 (VNTGRPR) coordinates substrate. GTP contacts are provided by residues Arg-304, 330–332 (KLD), and 412–414 (GVG).

It belongs to the adenylosuccinate synthetase family. In terms of assembly, homodimer. The cofactor is Mg(2+).

Its subcellular location is the cytoplasm. The catalysed reaction is IMP + L-aspartate + GTP = N(6)-(1,2-dicarboxyethyl)-AMP + GDP + phosphate + 2 H(+). It participates in purine metabolism; AMP biosynthesis via de novo pathway; AMP from IMP: step 1/2. Plays an important role in the de novo pathway of purine nucleotide biosynthesis. Catalyzes the first committed step in the biosynthesis of AMP from IMP. This is Adenylosuccinate synthetase from Pseudarthrobacter chlorophenolicus (strain ATCC 700700 / DSM 12829 / CIP 107037 / JCM 12360 / KCTC 9906 / NCIMB 13794 / A6) (Arthrobacter chlorophenolicus).